The sequence spans 152 residues: MQLHYVFSHLQNSFRARKSLASVPNCNSVLELCAVLYHQGFLSSIQRGDIHGPDALPTITTRQNVATRRLWLGLKYFEGKPVLHYIRAVSKPSRKVNLTPSELLQFAKGRKVSFVNGLEPAEVGIVETKHGIMSIDDAIKNNLGGNVICRVK.

This sequence belongs to the universal ribosomal protein uS8 family. In terms of assembly, component of the mitochondrial small ribosomal subunit (mt-SSU). Mature yeast 74S mitochondrial ribosomes consist of a small (37S) and a large (54S) subunit. The 37S small subunit contains a 15S ribosomal RNA (15S mt-rRNA) and at least 32 different proteins. The 54S large subunit contains a 21S rRNA (21S mt-rRNA) and at least 45 different proteins.

Its subcellular location is the mitochondrion. In terms of biological role, component of the mitochondrial ribosome (mitoribosome), a dedicated translation machinery responsible for the synthesis of mitochondrial genome-encoded proteins, including at least some of the essential transmembrane subunits of the mitochondrial respiratory chain. The mitoribosomes are attached to the mitochondrial inner membrane and translation products are cotranslationally integrated into the membrane. This Schizosaccharomyces pombe (strain 972 / ATCC 24843) (Fission yeast) protein is Small ribosomal subunit protein uS8m (mrps8).